Reading from the N-terminus, the 211-residue chain is dITP/XTP pyrophosphatase (211 aa).

13 to 18 (THNPGK) is a binding site for substrate. Residues D45 and D74 each contribute to the Mg(2+) site. D74 serves as the catalytic Proton acceptor. Residues S75, 160–163 (FGYD), K183, and 195–196 (HR) contribute to the substrate site.

This sequence belongs to the HAM1 NTPase family. As to quaternary structure, homodimer. The cofactor is Mg(2+).

The enzyme catalyses XTP + H2O = XMP + diphosphate + H(+). It carries out the reaction dITP + H2O = dIMP + diphosphate + H(+). It catalyses the reaction ITP + H2O = IMP + diphosphate + H(+). In terms of biological role, pyrophosphatase that catalyzes the hydrolysis of nucleoside triphosphates to their monophosphate derivatives, with a high preference for the non-canonical purine nucleotides XTP (xanthosine triphosphate), dITP (deoxyinosine triphosphate) and ITP. Seems to function as a house-cleaning enzyme that removes non-canonical purine nucleotides from the nucleotide pool, thus preventing their incorporation into DNA/RNA and avoiding chromosomal lesions. In Bradyrhizobium diazoefficiens (strain JCM 10833 / BCRC 13528 / IAM 13628 / NBRC 14792 / USDA 110), this protein is dITP/XTP pyrophosphatase.